A 192-amino-acid polypeptide reads, in one-letter code: Probable Brix domain-containing ribosomal biogenesis protein (192 aa).

The region spanning R2–K191 is the Brix domain.

Its function is as follows. Probably involved in the biogenesis of the ribosome. The protein is Probable Brix domain-containing ribosomal biogenesis protein of Methanopyrus kandleri (strain AV19 / DSM 6324 / JCM 9639 / NBRC 100938).